A 90-amino-acid polypeptide reads, in one-letter code: Probable Fe(2+)-trafficking protein (90 aa).

The protein belongs to the Fe(2+)-trafficking protein family.

Its function is as follows. Could be a mediator in iron transactions between iron acquisition and iron-requiring processes, such as synthesis and/or repair of Fe-S clusters in biosynthetic enzymes. This chain is Probable Fe(2+)-trafficking protein, found in Vibrio atlanticus (strain LGP32) (Vibrio splendidus (strain Mel32)).